Reading from the N-terminus, the 396-residue chain is Elongation factor Tu 1 (396 aa).

In terms of domain architecture, tr-type G spans 10–206; that stretch reads KPHVNVGTIG…QIDSYIPEPE (197 aa). The interval 19 to 26 is G1; sequence GHIDHGKT. 19–26 contacts GTP; sequence GHIDHGKT. Mg(2+) is bound at residue Thr-26. Residues 60 to 64 form a G2 region; it reads GITIA. The G3 stretch occupies residues 81–84; it reads DCPG. Residues 81-85 and 136-139 contribute to the GTP site; these read DCPGH and NKCD. The G4 stretch occupies residues 136-139; the sequence is NKCD. Positions 174–176 are G5; the sequence is SAL.

It belongs to the TRAFAC class translation factor GTPase superfamily. Classic translation factor GTPase family. EF-Tu/EF-1A subfamily. In terms of assembly, monomer.

The protein localises to the cytoplasm. It carries out the reaction GTP + H2O = GDP + phosphate + H(+). GTP hydrolase that promotes the GTP-dependent binding of aminoacyl-tRNA to the A-site of ribosomes during protein biosynthesis. This is Elongation factor Tu 1 from Desulfotalea psychrophila (strain LSv54 / DSM 12343).